Consider the following 207-residue polypeptide: Ribonuclease HII (207 aa).

The RNase H type-2 domain maps to 12–201; the sequence is ALVAGVDEVG…VRELLDVVSI (190 aa). 3 residues coordinate a divalent metal cation: aspartate 18, glutamate 19, and aspartate 110.

This sequence belongs to the RNase HII family. The cofactor is Mn(2+). Requires Mg(2+) as cofactor.

The protein localises to the cytoplasm. The enzyme catalyses Endonucleolytic cleavage to 5'-phosphomonoester.. In terms of biological role, endonuclease that specifically degrades the RNA of RNA-DNA hybrids. The polypeptide is Ribonuclease HII (Azotobacter vinelandii (strain DJ / ATCC BAA-1303)).